Here is a 325-residue protein sequence, read N- to C-terminus: Hydroxymethylglutaryl-CoA lyase, mitochondrial (325 aa).

The N-terminal 27 residues, 1–27 (MAAMRKAVPRRLVGLASLRAVSTSSMG), are a transit peptide targeting the mitochondrion. In terms of domain architecture, Pyruvate carboxyltransferase spans 33–300 (VKIVEVGPRD…HTGVNLQKLL (268 aa)). Position 41 (Arg-41) interacts with substrate. Position 42 (Asp-42) interacts with a divalent metal cation. The residue at position 48 (Lys-48) is an N6-acetyllysine; alternate. Residue Lys-48 is modified to N6-succinyllysine; alternate. Lys-111 is modified (N6-acetyllysine). N6-acetyllysine; alternate occurs at positions 137 and 179. N6-succinyllysine; alternate is present on residues Lys-137 and Lys-179. A divalent metal cation contacts are provided by His-233 and His-235. The active site involves Cys-266. An a divalent metal cation-binding site is contributed by Asn-275. The Microbody targeting signal signature appears at 323–325 (CKL). Residue Lys-324 is modified to N6-acetyllysine.

It belongs to the HMG-CoA lyase family. Homodimer; disulfide-linked. Can also form homotetramers.

The protein localises to the mitochondrion matrix. It localises to the peroxisome. The enzyme catalyses (3S)-3-hydroxy-3-methylglutaryl-CoA = acetoacetate + acetyl-CoA. The protein operates within metabolic intermediate metabolism; (S)-3-hydroxy-3-methylglutaryl-CoA degradation; acetoacetate from (S)-3-hydroxy-3-methylglutaryl-CoA: step 1/1. Its function is as follows. Mitochondrial 3-hydroxy-3-methylglutaryl-CoA lyase that catalyzes a cation-dependent cleavage of (S)-3-hydroxy-3-methylglutaryl-CoA into acetyl-CoA and acetoacetate, a key step in ketogenesis. Terminal step in leucine catabolism. Ketone bodies (beta-hydroxybutyrate, acetoacetate and acetone) are essential as an alternative source of energy to glucose, as lipid precursors and as regulators of metabolism. The protein is Hydroxymethylglutaryl-CoA lyase, mitochondrial (HMGCL) of Pongo abelii (Sumatran orangutan).